Here is a 129-residue protein sequence, read N- to C-terminus: Small ribosomal subunit protein bS16m (129 aa).

It belongs to the bacterial ribosomal protein bS16 family. Component of the mitochondrial ribosome small subunit (28S) which comprises a 12S rRNA and about 30 distinct proteins.

It localises to the mitochondrion. The polypeptide is Small ribosomal subunit protein bS16m (mRpS16) (Drosophila melanogaster (Fruit fly)).